The following is a 241-amino-acid chain: Orotidine 5'-phosphate decarboxylase (241 aa).

Substrate-binding positions include Asp-19, Lys-41, 69-78 (DLKFFDIPAT), Thr-124, Arg-185, Gln-194, Gly-214, and Arg-215. Lys-71 (proton donor) is an active-site residue.

It belongs to the OMP decarboxylase family. Type 1 subfamily. As to quaternary structure, homodimer.

The enzyme catalyses orotidine 5'-phosphate + H(+) = UMP + CO2. Its pathway is pyrimidine metabolism; UMP biosynthesis via de novo pathway; UMP from orotate: step 2/2. Catalyzes the decarboxylation of orotidine 5'-monophosphate (OMP) to uridine 5'-monophosphate (UMP). The polypeptide is Orotidine 5'-phosphate decarboxylase (Stenotrophomonas maltophilia (strain K279a)).